Reading from the N-terminus, the 138-residue chain is ATP synthase epsilon chain (138 aa).

This sequence belongs to the ATPase epsilon chain family. F-type ATPases have 2 components, CF(1) - the catalytic core - and CF(0) - the membrane proton channel. CF(1) has five subunits: alpha(3), beta(3), gamma(1), delta(1), epsilon(1). CF(0) has three main subunits: a, b and c.

The protein localises to the cell inner membrane. Its function is as follows. Produces ATP from ADP in the presence of a proton gradient across the membrane. This chain is ATP synthase epsilon chain, found in Bartonella henselae (strain ATCC 49882 / DSM 28221 / CCUG 30454 / Houston 1) (Rochalimaea henselae).